The sequence spans 158 residues: MKQVIIDLQLVCENTDNLPSEAQIQAWANRAIQPEFSDVEMTVRIVDEAESHDLNLTYRGKDKPTNVLSFPFECPDEVELSLLGDLVICRQVVEKEAEEQGKPLMAHWAHMVVHGCLHLLGYDHIEDAEAEEMEGLETEIMQSLGFDDPYLSEKEMHG.

His-114, His-118, and His-124 together coordinate Zn(2+).

The protein belongs to the endoribonuclease YbeY family. The cofactor is Zn(2+).

Its subcellular location is the cytoplasm. In terms of biological role, single strand-specific metallo-endoribonuclease involved in late-stage 70S ribosome quality control and in maturation of the 3' terminus of the 16S rRNA. This is Endoribonuclease YbeY from Pasteurella multocida (strain Pm70).